The sequence spans 371 residues: Cytochrome b (371 aa).

4 helical membrane-spanning segments follow: residues 25 to 45 (FGSM…FLAV), 69 to 90 (WLMQ…YIHI), 105 to 125 (WMSG…GYVL), and 170 to 190 (FFAL…LHII). Residues His-75 and His-89 each coordinate heme b. Heme b is bound by residues His-174 and His-188. His-193 provides a ligand contact to a ubiquinone. Helical transmembrane passes span 218 to 238 (YKDL…VSFF), 280 to 300 (LGGA…PLTH), 312 to 332 (LSQL…WAAT), and 339 to 358 (YIII…ISTP).

The protein belongs to the cytochrome b family. As to quaternary structure, the cytochrome bc1 complex contains 3 respiratory subunits (MT-CYB, CYC1 and UQCRFS1), 2 core proteins (UQCRC1 and UQCRC2) and probably 6 low-molecular weight proteins. Heme b serves as cofactor.

The protein localises to the mitochondrion inner membrane. Its function is as follows. Component of the ubiquinol-cytochrome c reductase complex (complex III or cytochrome b-c1 complex) that is part of the mitochondrial respiratory chain. The b-c1 complex mediates electron transfer from ubiquinol to cytochrome c. Contributes to the generation of a proton gradient across the mitochondrial membrane that is then used for ATP synthesis. The chain is Cytochrome b (MT-CYB) from Python regius (Ball python).